Reading from the N-terminus, the 332-residue chain is Heat-inducible transcription repressor HrcA (332 aa).

It belongs to the HrcA family.

Negative regulator of class I heat shock genes (grpE-dnaK-dnaJ and groELS operons). Prevents heat-shock induction of these operons. The sequence is that of Heat-inducible transcription repressor HrcA from Mycoplasma mobile (strain ATCC 43663 / 163K / NCTC 11711) (Mesomycoplasma mobile).